The primary structure comprises 387 residues: O-methyltransferase fsr2 (387 aa).

Residue Asp-231 participates in S-adenosyl-L-methionine binding. Residue His-280 is the Proton acceptor of the active site.

The protein belongs to the class I-like SAM-binding methyltransferase superfamily. Cation-independent O-methyltransferase family. COMT subfamily.

It functions in the pathway polyketide biosynthesis. In terms of biological role, O-methyltransferase; part of the gene cluster that mediates the biosynthesis of fusarubins, highly pigmented naphthoquinones responsible for the coloration of the fruiting bodies. The non-reducing polyketide synthase FSR1 is responsible for the condensation of seven acetyl-CoA units to yield a haptaketide. After rings A and B are formed by aldol-type cyclization, the PKS-derived product is released as 6-O-demethylfusarubinaldehyde. Then, two hydroxyl groups at C-5 and C-10 are incorporated by FSR3, and simultaneously hydroxyl groups at C-6 and C-8 are methylated by FSR2. The aldehyde is, on the one hand, reduced by FSR3 to 8-O-methylfusarubin alcohol, which equilibrates mainly with 8-O-methylfusarubin and only small amounts of 8-O-methylnectriafurone. On the other hand, the aldehyde can be oxidized to form 8-O-methylfusarubinic acid, a reaction driven by FSR3 equilibrating with 8-O-methylfusarubinlactone, finally resulting in 8-O-methylanhydrofusarubinlactol after a further reduction step and loss of water. 8-O-Methylfusarubinic acid can also undergo decarboxylation, resulting in 8-O-methyl-13-hydroxynorjavanicin after another hydroxylation step at C-13. Both steps are most likely also accomplished by FSR3. No enzymatic function has been determined so far for either FSR4 and FSR5. Their deletion does not alter the product spectrum, but the possibility that they catalyze specific enzymatic steps during perithecium development cannot be ruled out. FSR4 might possess a regulatory function in the biosynthesis of fusarubins. The polypeptide is O-methyltransferase fsr2 (Gibberella fujikuroi (strain CBS 195.34 / IMI 58289 / NRRL A-6831) (Bakanae and foot rot disease fungus)).